The primary structure comprises 478 residues: Protein nucleotidyltransferase YdiU (478 aa).

Glycine 84, glycine 86, arginine 87, lysine 107, aspartate 119, glycine 120, arginine 170, and arginine 177 together coordinate ATP. The Proton acceptor role is filled by aspartate 246. Asparagine 247 and aspartate 256 together coordinate Mg(2+). Aspartate 256 is an ATP binding site.

This sequence belongs to the SELO family. The cofactor is Mg(2+). Requires Mn(2+) as cofactor.

It catalyses the reaction L-seryl-[protein] + ATP = 3-O-(5'-adenylyl)-L-seryl-[protein] + diphosphate. The catalysed reaction is L-threonyl-[protein] + ATP = 3-O-(5'-adenylyl)-L-threonyl-[protein] + diphosphate. It carries out the reaction L-tyrosyl-[protein] + ATP = O-(5'-adenylyl)-L-tyrosyl-[protein] + diphosphate. The enzyme catalyses L-histidyl-[protein] + UTP = N(tele)-(5'-uridylyl)-L-histidyl-[protein] + diphosphate. It catalyses the reaction L-seryl-[protein] + UTP = O-(5'-uridylyl)-L-seryl-[protein] + diphosphate. The catalysed reaction is L-tyrosyl-[protein] + UTP = O-(5'-uridylyl)-L-tyrosyl-[protein] + diphosphate. In terms of biological role, nucleotidyltransferase involved in the post-translational modification of proteins. It can catalyze the addition of adenosine monophosphate (AMP) or uridine monophosphate (UMP) to a protein, resulting in modifications known as AMPylation and UMPylation. The protein is Protein nucleotidyltransferase YdiU of Escherichia coli (strain SE11).